The primary structure comprises 595 residues: 73 kDa paraflagellar rod protein (595 aa).

The segment at 294 to 317 (DAEATKRHAANKEKSDRYIRENED) is disordered. Residues 317-337 (DRQEETWNKIQDLERQLQKLG) are calmodulin-binding.

In terms of assembly, heterodimer of a 69 kDa and a 73 kDa protein.

The protein resides in the cell projection. It is found in the cilium. Its subcellular location is the flagellum. It localises to the cytoplasm. The protein localises to the cytoskeleton. In terms of biological role, major component of the paraflagellar rod (PFR). The PFR is a highly ordered lattices of fibrous proteins that are located inside the flagellum and assume a fixed orientation with respect to the microtubular axoneme. The sequence is that of 73 kDa paraflagellar rod protein (PFRC) from Trypanosoma brucei brucei.